Here is a 358-residue protein sequence, read N- to C-terminus: WD repeat-containing protein 53 (358 aa).

WD repeat units lie at residues 1–38 (MAVK…AWGE), 43–80 (LGHT…VLDV), 85–123 (DSLD…ILDL), 127–166 (KVIR…LWSL), 173–225 (WITN…RIFR), and 232–270 (EQEL…LWDA). Positions 273 to 311 (EVEKKQKSPTKRTHRKKPKRGTCTKQGGNTNASVTDEEE) are disordered. Positions 279–294 (KSPTKRTHRKKPKRGT) are enriched in basic residues. Positions 295-306 (CTKQGGNTNASV) are enriched in polar residues. The WD 7 repeat unit spans residues 314–355 (NILPKLNIEHGEKVNWLLGTKIKGHQNILVADQTSCISVYPL).

This sequence belongs to the WD repeat WDR53 family.

In Homo sapiens (Human), this protein is WD repeat-containing protein 53 (WDR53).